A 1256-amino-acid chain; its full sequence is Bifunctional autolysin (1256 aa).

An N-terminal signal peptide occupies residues methionine 1 to alanine 29. Polar residues predominate over residues glycine 103–glycine 138. 3 disordered regions span residues glycine 103–asparagine 151, lysine 172–leucine 214, and threonine 419–glycine 440. 2 stretches are compositionally biased toward low complexity: residues lysine 172–threonine 196 and serine 421–threonine 439. The tract at residues alanine 199–lysine 775 is N-acetylmuramoyl-L-alanine amidase. GW domains are found at residues threonine 443–alanine 517, serine 519–lysine 593, threonine 612–alanine 686, serine 688–alanine 762, threonine 784–leucine 859, lysine 861–alanine 936, and alanine 943–isoleucine 1017. The tract at residues alanine 776–lysine 1256 is endo-beta-N-acetylglucosaminidase.

It in the N-terminal section; belongs to the N-acetylmuramoyl-L-alanine amidase 2 family. The protein in the C-terminal section; belongs to the glycosyl hydrolase 73 family. As to quaternary structure, oligomer; forms a ring structure at the cell surface which is important for efficient partitioning of daughter cells after cell division. Undergoes proteolytic processing to generate the two extracellular lytic enzymes, probably at the septal region on the cell surface.

It is found in the secreted. The catalysed reaction is Hydrolyzes the link between N-acetylmuramoyl residues and L-amino acid residues in certain cell-wall glycopeptides.. It catalyses the reaction an N(4)-(oligosaccharide-(1-&gt;3)-[oligosaccharide-(1-&gt;6)]-beta-D-Man-(1-&gt;4)-beta-D-GlcNAc-(1-&gt;4)-alpha-D-GlcNAc)-L-asparaginyl-[protein] + H2O = an oligosaccharide-(1-&gt;3)-[oligosaccharide-(1-&gt;6)]-beta-D-Man-(1-&gt;4)-D-GlcNAc + N(4)-(N-acetyl-beta-D-glucosaminyl)-L-asparaginyl-[protein]. Endohydrolysis of the di-N-acetylchitobiosyl unit in high-mannose glycopeptides and glycoproteins containing the -[(Man)5(GlcNAc)2]-Asn structure. One N-acetyl-D-glucosamine residue remains attached to the protein; the rest of the oligosaccharide is released intact. Cleaves the peptidoglycan connecting the daughter cells at the end of the cell division cycle, resulting in the separation of the two newly divided cells. Acts as an autolysin in penicillin-induced lysis. The protein is Bifunctional autolysin (atl) of Staphylococcus aureus (strain NCTC 8325 / PS 47).